The sequence spans 297 residues: Nucleotide-binding protein BMA10229_A1510 (297 aa).

An ATP-binding site is contributed by 8-15 (GISGSGKS). 57–60 (DARS) provides a ligand contact to GTP.

It belongs to the RapZ-like family.

Its function is as follows. Displays ATPase and GTPase activities. This Burkholderia mallei (strain NCTC 10229) protein is Nucleotide-binding protein BMA10229_A1510.